We begin with the raw amino-acid sequence, 275 residues long: Formamidopyrimidine-DNA glycosylase (275 aa).

The active-site Schiff-base intermediate with DNA is proline 2. Glutamate 3 acts as the Proton donor in catalysis. Lysine 60 functions as the Proton donor; for beta-elimination activity in the catalytic mechanism. Positions 93 and 112 each coordinate DNA. The segment at 240 to 274 (FVYGRKDEPCKKCGSPIEKTVVGGRGTHFCIKCQK) adopts an FPG-type zinc-finger fold. Arginine 264 acts as the Proton donor; for delta-elimination activity in catalysis.

Belongs to the FPG family. As to quaternary structure, monomer. The cofactor is Zn(2+).

It carries out the reaction Hydrolysis of DNA containing ring-opened 7-methylguanine residues, releasing 2,6-diamino-4-hydroxy-5-(N-methyl)formamidopyrimidine.. It catalyses the reaction 2'-deoxyribonucleotide-(2'-deoxyribose 5'-phosphate)-2'-deoxyribonucleotide-DNA = a 3'-end 2'-deoxyribonucleotide-(2,3-dehydro-2,3-deoxyribose 5'-phosphate)-DNA + a 5'-end 5'-phospho-2'-deoxyribonucleoside-DNA + H(+). Functionally, involved in base excision repair of DNA damaged by oxidation or by mutagenic agents. Acts as a DNA glycosylase that recognizes and removes damaged bases. Has a preference for oxidized purines, such as 7,8-dihydro-8-oxoguanine (8-oxoG). Has AP (apurinic/apyrimidinic) lyase activity and introduces nicks in the DNA strand. Cleaves the DNA backbone by beta-delta elimination to generate a single-strand break at the site of the removed base with both 3'- and 5'-phosphates. The protein is Formamidopyrimidine-DNA glycosylase of Bacillus licheniformis (strain ATCC 14580 / DSM 13 / JCM 2505 / CCUG 7422 / NBRC 12200 / NCIMB 9375 / NCTC 10341 / NRRL NRS-1264 / Gibson 46).